Here is a 478-residue protein sequence, read N- to C-terminus: 3-isopropylmalate dehydratase large subunit (478 aa).

[4Fe-4S] cluster contacts are provided by Cys347, Cys407, and Cys410.

The protein belongs to the aconitase/IPM isomerase family. LeuC type 1 subfamily. Heterodimer of LeuC and LeuD. [4Fe-4S] cluster is required as a cofactor.

It catalyses the reaction (2R,3S)-3-isopropylmalate = (2S)-2-isopropylmalate. It participates in amino-acid biosynthesis; L-leucine biosynthesis; L-leucine from 3-methyl-2-oxobutanoate: step 2/4. In terms of biological role, catalyzes the isomerization between 2-isopropylmalate and 3-isopropylmalate, via the formation of 2-isopropylmaleate. The polypeptide is 3-isopropylmalate dehydratase large subunit (Prochlorococcus marinus (strain MIT 9313)).